A 418-amino-acid chain; its full sequence is UDP-N-acetylglucosamine 1-carboxyvinyltransferase (418 aa).

Lys-22 to Asn-23 lines the phosphoenolpyruvate pocket. Arg-92 serves as a coordination point for UDP-N-acetyl-alpha-D-glucosamine. The active-site Proton donor is the Cys-116. 2-(S-cysteinyl)pyruvic acid O-phosphothioketal is present on Cys-116. Residues Arg-121 to Leu-125, Asp-305, and Leu-327 each bind UDP-N-acetyl-alpha-D-glucosamine.

Belongs to the EPSP synthase family. MurA subfamily.

It is found in the cytoplasm. It catalyses the reaction phosphoenolpyruvate + UDP-N-acetyl-alpha-D-glucosamine = UDP-N-acetyl-3-O-(1-carboxyvinyl)-alpha-D-glucosamine + phosphate. The protein operates within cell wall biogenesis; peptidoglycan biosynthesis. Functionally, cell wall formation. Adds enolpyruvyl to UDP-N-acetylglucosamine. The polypeptide is UDP-N-acetylglucosamine 1-carboxyvinyltransferase (Campylobacter jejuni subsp. doylei (strain ATCC BAA-1458 / RM4099 / 269.97)).